Reading from the N-terminus, the 320-residue chain is Malate dehydrogenase (320 aa).

NAD(+)-binding positions include 10 to 15 (GAGQIG) and Asp-34. Substrate is bound by residues Arg-83 and Arg-89. NAD(+) contacts are provided by residues Asn-96 and 119-121 (ITN). Substrate contacts are provided by Asn-121 and Arg-152. The active-site Proton acceptor is His-176.

Belongs to the LDH/MDH superfamily. MDH type 3 family.

It catalyses the reaction (S)-malate + NAD(+) = oxaloacetate + NADH + H(+). Catalyzes the reversible oxidation of malate to oxaloacetate. The sequence is that of Malate dehydrogenase from Methylobacterium sp. (strain 4-46).